A 268-amino-acid chain; its full sequence is Ribosomal RNA small subunit methyltransferase A (268 aa).

N18, L20, G45, E66, D91, and N112 together coordinate S-adenosyl-L-methionine.

Belongs to the class I-like SAM-binding methyltransferase superfamily. rRNA adenine N(6)-methyltransferase family. RsmA subfamily.

It is found in the cytoplasm. It catalyses the reaction adenosine(1518)/adenosine(1519) in 16S rRNA + 4 S-adenosyl-L-methionine = N(6)-dimethyladenosine(1518)/N(6)-dimethyladenosine(1519) in 16S rRNA + 4 S-adenosyl-L-homocysteine + 4 H(+). Specifically dimethylates two adjacent adenosines (A1518 and A1519) in the loop of a conserved hairpin near the 3'-end of 16S rRNA in the 30S particle. May play a critical role in biogenesis of 30S subunits. This Shewanella sp. (strain MR-7) protein is Ribosomal RNA small subunit methyltransferase A.